The chain runs to 272 residues: Shikimate dehydrogenase (NADP(+)) (272 aa).

Shikimate contacts are provided by residues 19 to 21 (SLS) and Thr66. Catalysis depends on Lys70, which acts as the Proton acceptor. Glu82 contributes to the NADP(+) binding site. Positions 91 and 106 each coordinate shikimate. NADP(+) is bound by residues 129-133 (GAGGA), 151-156 (NRTPEK), and Ile214. Tyr216 contacts shikimate. Gly237 contacts NADP(+).

This sequence belongs to the shikimate dehydrogenase family. In terms of assembly, homodimer.

The enzyme catalyses shikimate + NADP(+) = 3-dehydroshikimate + NADPH + H(+). The protein operates within metabolic intermediate biosynthesis; chorismate biosynthesis; chorismate from D-erythrose 4-phosphate and phosphoenolpyruvate: step 4/7. In terms of biological role, involved in the biosynthesis of the chorismate, which leads to the biosynthesis of aromatic amino acids. Catalyzes the reversible NADPH linked reduction of 3-dehydroshikimate (DHSA) to yield shikimate (SA). This chain is Shikimate dehydrogenase (NADP(+)), found in Thermococcus kodakarensis (strain ATCC BAA-918 / JCM 12380 / KOD1) (Pyrococcus kodakaraensis (strain KOD1)).